Here is a 314-residue protein sequence, read N- to C-terminus: Probable cell division protein WhiA (314 aa).

A DNA-binding region (H-T-H motif) is located at residues 274–305; that stretch reads SLAELGDRLEISKSGANHRMRKLKALEDMINA.

It belongs to the WhiA family.

Involved in cell division and chromosome segregation. The chain is Probable cell division protein WhiA from Leuconostoc citreum (strain KM20).